The chain runs to 206 residues: Small ribosomal subunit protein uS4 (206 aa).

The 61-residue stretch at 96-156 folds into the S4 RNA-binding domain; it reads GRLDNVVYRM…EKAKNQLRVK (61 aa).

This sequence belongs to the universal ribosomal protein uS4 family. As to quaternary structure, part of the 30S ribosomal subunit. Contacts protein S5. The interaction surface between S4 and S5 is involved in control of translational fidelity.

One of the primary rRNA binding proteins, it binds directly to 16S rRNA where it nucleates assembly of the body of the 30S subunit. Its function is as follows. With S5 and S12 plays an important role in translational accuracy. The protein is Small ribosomal subunit protein uS4 of Marinobacter nauticus (strain ATCC 700491 / DSM 11845 / VT8) (Marinobacter aquaeolei).